A 129-amino-acid chain; its full sequence is Protein BEX2 (129 aa).

The interval 1-38 (MESKVEQGVKNLNMENDHQEKEEKEEKPQDANKREPVV) is disordered. Residues 15 to 36 (ENDHQEKEEKEEKPQDANKREP) are compositionally biased toward basic and acidic residues. Arginine 51 carries the post-translational modification Omega-N-methylarginine. A disordered region spans residues 108–129 (SLRAVSTDPPHHDHHDEFCLMP). The span at 116 to 129 (PPHHDHHDEFCLMP) shows a compositional bias: basic and acidic residues. Residues 118–122 (HHDHH) are his cluster. Residue cysteine 126 participates in Zn(2+) binding.

It belongs to the BEX family. In terms of assembly, interacts with LMO2, possibly leading to regulate the transcriptional activity of a DNA-binding complex containing LMO2. Interacts with OMP.

Its subcellular location is the nucleus. It localises to the cytoplasm. Functionally, regulator of mitochondrial apoptosis and G1 cell cycle. Regulates the level of PP2A regulatory subunit B and PP2A phosphatase activity. In absence of reductive stress, acts as a pseudosubstrate for the CRL2(FEM1B) complex: associates with FEM1B via zinc, thereby preventing association between FEM1B and its substrates. In Rattus norvegicus (Rat), this protein is Protein BEX2 (Bex2).